Here is a 475-residue protein sequence, read N- to C-terminus: Aspartyl/glutamyl-tRNA(Asn/Gln) amidotransferase subunit B (475 aa).

Belongs to the GatB/GatE family. GatB subfamily. As to quaternary structure, heterotrimer of A, B and C subunits.

The enzyme catalyses L-glutamyl-tRNA(Gln) + L-glutamine + ATP + H2O = L-glutaminyl-tRNA(Gln) + L-glutamate + ADP + phosphate + H(+). It carries out the reaction L-aspartyl-tRNA(Asn) + L-glutamine + ATP + H2O = L-asparaginyl-tRNA(Asn) + L-glutamate + ADP + phosphate + 2 H(+). Functionally, allows the formation of correctly charged Asn-tRNA(Asn) or Gln-tRNA(Gln) through the transamidation of misacylated Asp-tRNA(Asn) or Glu-tRNA(Gln) in organisms which lack either or both of asparaginyl-tRNA or glutaminyl-tRNA synthetases. The reaction takes place in the presence of glutamine and ATP through an activated phospho-Asp-tRNA(Asn) or phospho-Glu-tRNA(Gln). This Mycoplasma mobile (strain ATCC 43663 / 163K / NCTC 11711) (Mesomycoplasma mobile) protein is Aspartyl/glutamyl-tRNA(Asn/Gln) amidotransferase subunit B.